We begin with the raw amino-acid sequence, 787 residues long: Glutamine-dependent NAD(+) synthetase (787 aa).

Positions 5-275 (VTVAVSTLNQ…VEVTLATIDL (271 aa)) constitute a CN hydrolase domain. Residue E45 is the Proton acceptor; for glutaminase activity of the active site. K114 acts as the For glutaminase activity in catalysis. The Nucleophile; for glutaminase activity role is filled by C175. Positions 325-787 (MHTPEEEIAL…KIKDRTGIPV (463 aa)) are ligase. 355 to 362 (PLSGGVDS) contributes to the ATP binding site. S357 is an active-site residue. Phosphoserine is present on S703.

This sequence in the C-terminal section; belongs to the NAD synthetase family.

It carries out the reaction deamido-NAD(+) + L-glutamine + ATP + H2O = L-glutamate + AMP + diphosphate + NAD(+) + H(+). It functions in the pathway cofactor biosynthesis; NAD(+) biosynthesis; NAD(+) from deamido-NAD(+) (L-Gln route): step 1/1. Its function is as follows. Catalyzes the ATP-dependent amidation of deamido-NAD to form NAD. Uses L-glutamine as a nitrogen source. Because of its role in energy metabolism, involved in the modulation of aged-related cardiac function, mobility, and lifespan. The polypeptide is Glutamine-dependent NAD(+) synthetase (Drosophila melanogaster (Fruit fly)).